A 414-amino-acid chain; its full sequence is Chaperone protein dnaJ 39 (414 aa).

Over residues 1–24 (MATHSSRSENKDAGEEDELRRRNP) the composition is skewed to basic and acidic residues. The tract at residues 1-36 (MATHSSRSENKDAGEEDELRRRNPYEVLGIPSNSTD) is disordered. The J domain occupies 23-88 (NPYEVLGIPS…ENRRLYDTTG (66 aa)). Residues 296–324 (EKESLRSTEAQIVSKRTELLKFEAEYHEV) are a coiled coil. The tract at residues 362-395 (TKQGSSKSRSWSKKKSSLLMEPREEGEVAVREEG) is disordered. Residues 382-395 (EPREEGEVAVREEG) show a composition bias toward basic and acidic residues.

Belongs to the DnaJ family. C/III subfamily. Expressed constitutively at low levels in seedlings, roots, leaves, stems, flowers and siliques.

It localises to the membrane. In terms of biological role, plays a continuous role in plant development probably in the structural organization of compartments. Seems to be involved in early gravitropic signal transduction within the gravity-perceiving cells (statocytes). This Arabidopsis thaliana (Mouse-ear cress) protein is Chaperone protein dnaJ 39 (ATJ39).